We begin with the raw amino-acid sequence, 419 residues long: Subtilisin-like protease 2 (419 aa).

The first 16 residues, 1–16 (MQLLNFGLLLLPFVAG), serve as a signal peptide directing secretion. The propeptide occupies 17 to 122 (DLAPQPEPLL…VHPDQHVYLA (106 aa)). Residues 36-122 (QYIVTLKEGL…VHPDQHVYLA (87 aa)) form the Inhibitor I9 domain. One can recognise a Peptidase S8 domain in the interval 131–419 (RWGLGYMSSK…IQERKFKLPK (289 aa)). Active-site charge relay system residues include Asp169 and His201. Asn248, Asn261, and Asn348 each carry an N-linked (GlcNAc...) asparagine glycan. The active-site Charge relay system is the Ser357. N-linked (GlcNAc...) asparagine glycosylation is present at Asn388.

The protein belongs to the peptidase S8 family.

It localises to the secreted. Functionally, secreted subtilisin-like serine protease with keratinolytic activity that contributes to pathogenicity. The sequence is that of Subtilisin-like protease 2 (SUB2) from Arthroderma benhamiae (Trichophyton mentagrophytes).